Reading from the N-terminus, the 505-residue chain is Phosphoglycerate kinase A (505 aa).

Valine 32, aspartate 33, phenylalanine 34, asparagine 35, arginine 48, serine 70, histidine 71, glycine 73, arginine 74, arginine 224, histidine 260, and arginine 261 together coordinate (2R)-3-phosphoglycerate. 2 residues coordinate ADP: glycine 306 and alanine 307. Glycine 306 is a CDP binding site. Alanine 307 and lysine 308 together coordinate AMP. ATP is bound at residue alanine 307. Residue alanine 307 participates in Mg(2+) binding. Residue lysine 308 participates in (2R)-3-phosphoglycerate binding. Glutamate 311 is a CDP binding site. Glutamate 311 contacts Mg(2+). Lysine 312 and glycine 330 together coordinate ADP. Lysine 312 lines the AMP pocket. Lysine 312 is an ATP binding site. Glycine 330 is a CDP binding site. AMP contacts are provided by alanine 331 and alanine 403. 2 residues coordinate ATP: alanine 331 and alanine 403. Alanine 403 and asparagine 427 together coordinate ADP. CDP contacts are provided by glycine 428 and phenylalanine 433. ADP-binding residues include phenylalanine 433, glutamate 434, glutamate 466, and serine 467. Glutamate 434 is an AMP binding site. Residues glutamate 434, glutamate 466, and serine 467 each coordinate ATP. Glutamate 466 contacts Mg(2+).

This sequence belongs to the phosphoglycerate kinase family. Monomer. The cofactor is Mg(2+).

It carries out the reaction (2R)-3-phosphoglycerate + ATP = (2R)-3-phospho-glyceroyl phosphate + ADP. The protein operates within carbohydrate degradation; glycolysis; pyruvate from D-glyceraldehyde 3-phosphate: step 2/5. This chain is Phosphoglycerate kinase A, found in Trypanosoma brucei brucei.